Here is a 728-residue protein sequence, read N- to C-terminus: Catalase-peroxidase (728 aa).

Positions 91 to 218 (WHSAGTYRTA…LAAVQMGLIY (128 aa)) form a cross-link, tryptophyl-tyrosyl-methioninium (Trp-Tyr) (with M-244). His-92 acts as the Proton acceptor in catalysis. A cross-link (tryptophyl-tyrosyl-methioninium (Tyr-Met) (with W-91)) is located at residues 218-244 (YVNPEGPDGNPDPVAAARDIRDTFARM). His-259 contributes to the heme b binding site.

This sequence belongs to the peroxidase family. Peroxidase/catalase subfamily. Homodimer or homotetramer. The cofactor is heme b. Formation of the three residue Trp-Tyr-Met cross-link is important for the catalase, but not the peroxidase activity of the enzyme.

The catalysed reaction is H2O2 + AH2 = A + 2 H2O. It catalyses the reaction 2 H2O2 = O2 + 2 H2O. Its function is as follows. Bifunctional enzyme with both catalase and broad-spectrum peroxidase activity. This Burkholderia mallei (strain NCTC 10247) protein is Catalase-peroxidase.